Reading from the N-terminus, the 346-residue chain is Holliday junction branch migration complex subunit RuvB (346 aa).

The tract at residues 1–182 is large ATPase domain (RuvB-L); the sequence is MSEPARLISP…FGIPVRLSFY (182 aa). Residues L21, R22, G63, K66, T67, T68, 129 to 131, R172, Y182, and R219 each bind ATP; that span reads EDF. T67 is a binding site for Mg(2+). Positions 183-253 are small ATPAse domain (RuvB-S); it reads TVEELELIVR…IADEALTRLL (71 aa). The tract at residues 256–346 is head domain (RuvB-H); it reads NVGFDQLDKR…AQFRLFQEDN (91 aa). Positions 292, 311, and 316 each coordinate DNA.

It belongs to the RuvB family. In terms of assembly, homohexamer. Forms an RuvA(8)-RuvB(12)-Holliday junction (HJ) complex. HJ DNA is sandwiched between 2 RuvA tetramers; dsDNA enters through RuvA and exits via RuvB. An RuvB hexamer assembles on each DNA strand where it exits the tetramer. Each RuvB hexamer is contacted by two RuvA subunits (via domain III) on 2 adjacent RuvB subunits; this complex drives branch migration. In the full resolvosome a probable DNA-RuvA(4)-RuvB(12)-RuvC(2) complex forms which resolves the HJ.

The protein localises to the cytoplasm. The catalysed reaction is ATP + H2O = ADP + phosphate + H(+). Its function is as follows. The RuvA-RuvB-RuvC complex processes Holliday junction (HJ) DNA during genetic recombination and DNA repair, while the RuvA-RuvB complex plays an important role in the rescue of blocked DNA replication forks via replication fork reversal (RFR). RuvA specifically binds to HJ cruciform DNA, conferring on it an open structure. The RuvB hexamer acts as an ATP-dependent pump, pulling dsDNA into and through the RuvAB complex. RuvB forms 2 homohexamers on either side of HJ DNA bound by 1 or 2 RuvA tetramers; 4 subunits per hexamer contact DNA at a time. Coordinated motions by a converter formed by DNA-disengaged RuvB subunits stimulates ATP hydrolysis and nucleotide exchange. Immobilization of the converter enables RuvB to convert the ATP-contained energy into a lever motion, pulling 2 nucleotides of DNA out of the RuvA tetramer per ATP hydrolyzed, thus driving DNA branch migration. The RuvB motors rotate together with the DNA substrate, which together with the progressing nucleotide cycle form the mechanistic basis for DNA recombination by continuous HJ branch migration. Branch migration allows RuvC to scan DNA until it finds its consensus sequence, where it cleaves and resolves cruciform DNA. The chain is Holliday junction branch migration complex subunit RuvB from Rhizobium leguminosarum bv. trifolii (strain WSM2304).